Here is a 132-residue protein sequence, read N- to C-terminus: Homeobox protein HD-4 (132 aa).

The segment at residues 29–88 (GLSGYRYKTHIQVYVLTKIFEITQYPSHDTRQNLAILLNMSPRTIQIWFQNSRSVSRGAA) is a DNA-binding region (homeobox). Residues 82–101 (SVSRGAAKKKVSKDNGPQEA) form a disordered region.

It localises to the nucleus. In Encephalitozoon cuniculi (strain GB-M1) (Microsporidian parasite), this protein is Homeobox protein HD-4 (HD-4).